We begin with the raw amino-acid sequence, 291 residues long: Protease HtpX homolog (291 aa).

2 consecutive transmembrane segments (helical) span residues 11 to 31 (INTFLILFVFILACGGFGLLA) and 34 to 54 (FLGMSFFLFILLLAAGYACVQ). Zn(2+) is bound at residue H140. Residue E141 is part of the active site. Position 144 (H144) interacts with Zn(2+). 2 helical membrane passes run 155–175 (IVFGLVSAVGLISDMVLRALI) and 186–206 (AFSFVIVLFFSLLAPIAAMLV). A Zn(2+)-binding site is contributed by E215.

Belongs to the peptidase M48B family. Zn(2+) is required as a cofactor.

The protein resides in the cell membrane. The protein is Protease HtpX homolog of Tropheryma whipplei (strain Twist) (Whipple's bacillus).